The primary structure comprises 350 residues: Protein memo-1 homolog (350 aa).

It belongs to the MEMO1 family. As to quaternary structure, interacts with rho-1. Expressed in neuronal and non-neuronal cells in the head and tail, pharyngeal cells, spermatheca, distal tip cells, anchor cell and the intestine.

Plays a role in the oxidative stress response and the maintenance of longevity by regulating the interaction between GTPase rho-1 and oxidase bli-3. In turn, this serves to modulate bli-3 activity and the control of reactive oxygen species production. May control cell migration by relaying extracellular chemotactic signals to the microtubule cytoskeleton. The sequence is that of Protein memo-1 homolog from Caenorhabditis elegans.